The sequence spans 101 residues: Small ribosomal subunit protein uS10 (101 aa).

Belongs to the universal ribosomal protein uS10 family. In terms of assembly, part of the 30S ribosomal subunit.

In terms of biological role, involved in the binding of tRNA to the ribosomes. The sequence is that of Small ribosomal subunit protein uS10 from Flavobacterium johnsoniae (strain ATCC 17061 / DSM 2064 / JCM 8514 / BCRC 14874 / CCUG 350202 / NBRC 14942 / NCIMB 11054 / UW101) (Cytophaga johnsonae).